A 245-amino-acid chain; its full sequence is 6-carboxyhexanoate--CoA ligase (245 aa).

It belongs to the BioW family. In terms of assembly, homodimer. Mg(2+) is required as a cofactor.

The enzyme catalyses heptanedioate + ATP + CoA = 6-carboxyhexanoyl-CoA + AMP + diphosphate. It participates in metabolic intermediate metabolism; pimeloyl-CoA biosynthesis; pimeloyl-CoA from pimelate: step 1/1. In terms of biological role, catalyzes the transformation of pimelate into pimeloyl-CoA with concomitant hydrolysis of ATP to AMP. The protein is 6-carboxyhexanoate--CoA ligase of Thermodesulfovibrio yellowstonii (strain ATCC 51303 / DSM 11347 / YP87).